The sequence spans 217 residues: Insulin-like growth factor 2.L (217 aa).

A signal peptide spans 1–56 (MEQLSCKHRSSSMEAEAQLCRQTESRSTQLPRMSVMRHLFLLSITFLVYTLDSAKA). Positions 57 to 83 (YRPTETLCGGELVDTLQFVCGDRGFYF) are b. 3 disulfides stabilise this stretch: cysteine 64–cysteine 103, cysteine 76–cysteine 116, and cysteine 102–cysteine 107. The tract at residues 84 to 96 (STNNGRSNRRSNR) is c. The interval 97–117 (GIVEECCFRSCDLELLETYCA) is a. The segment at 118-123 (KPSKNE) is d. Residues 124-217 (RDVSTAPATA…LQQTSEPSHN (94 aa)) constitute a propeptide, e peptide.

Belongs to the insulin family.

The protein resides in the secreted. Functionally, the insulin-like growth factors, isolated from plasma, are structurally and functionally related to insulin but have a much higher growth-promoting activity. Promotes anterior neural development. Acts as a ligand for integrin which is required for IGF2 signaling. The protein is Insulin-like growth factor 2.L of Xenopus laevis (African clawed frog).